The following is an 848-amino-acid chain: Leucine--tRNA ligase (848 aa).

The segment at 1-21 (MTENTPGTSAPERFDPATADT) is disordered. The short motif at 51–61 (PYPSGRIHIGH) is the 'HIGH' region element. The short motif at 625–629 (KMSKS) is the 'KMSKS' region element. Lys628 contributes to the ATP binding site.

Belongs to the class-I aminoacyl-tRNA synthetase family.

The protein resides in the cytoplasm. The enzyme catalyses tRNA(Leu) + L-leucine + ATP = L-leucyl-tRNA(Leu) + AMP + diphosphate. The protein is Leucine--tRNA ligase of Novosphingobium aromaticivorans (strain ATCC 700278 / DSM 12444 / CCUG 56034 / CIP 105152 / NBRC 16084 / F199).